The primary structure comprises 202 residues: MAQADLFGDAAYPDQGVAGVDEAGRGPLAGAVYAAAVILDPQRPIDGLADSKVLKAERRERLAEQIKAQALSWCIACASTDEIDSMNILRATLLAMQRAVEGLNQLPSLALVDGNQAPRLRCAVQTIIKGDALVPAISAASILAKTARDAELQRLHALYPQYGFDQHKGYGTALHLARLREYGPCPEHRRSFAPIKAFGISA.

Positions 15 to 202 constitute an RNase H type-2 domain; the sequence is QGVAGVDEAG…APIKAFGISA (188 aa). Residues Asp21, Glu22, and Asp113 each coordinate a divalent metal cation.

The protein belongs to the RNase HII family. Requires Mn(2+) as cofactor. Mg(2+) serves as cofactor.

The protein resides in the cytoplasm. It catalyses the reaction Endonucleolytic cleavage to 5'-phosphomonoester.. Functionally, endonuclease that specifically degrades the RNA of RNA-DNA hybrids. In Bordetella avium (strain 197N), this protein is Ribonuclease HII.